A 338-amino-acid polypeptide reads, in one-letter code: Solute carrier family 35 member G5 (338 aa).

The segment at 1–21 is disordered; sequence MAGSHPYFNLPDSTHPSPPSA. The next 9 helical transmembrane spans lie at 37–57, 67–87, 105–125, 160–180, 190–210, 221–241, 250–270, 281–301, and 305–325; these read TNGL…VGPL, LPSL…ALPL, CFCA…VQVV, CGLL…LWTL, ALGY…LLVY, TVAF…LFVL, LLSW…FTCV, LVCA…YYVL, and VAPF…IITA. The 126-residue stretch at 49-174 folds into the EamA 1 domain; it reads LPAGFVGPLS…SILGLIIIVG (126 aa). The 54-residue stretch at 272–325 folds into the EamA 2 domain; that stretch reads YAVTKAHPALVCAVLHSEVVVALILQYYVLHETVAPFDITGAGIVLGSIAIITA.

This sequence belongs to the SLC35G solute transporter family.

It localises to the membrane. In Pan paniscus (Pygmy chimpanzee), this protein is Solute carrier family 35 member G5 (SLC35G5).